The primary structure comprises 131 residues: Histone H2A type 1-A (131 aa).

Positions 1–23 (MSGRGKQGGKARAKSKSRSSRAG) are disordered. Ser2 carries the N-acetylserine modification. Residue Ser2 is modified to Phosphoserine; by RPS6KA5. Citrulline; alternate is present on Arg4. Arg4 carries the post-translational modification Symmetric dimethylarginine; by PRMT5; alternate. Lys6 bears the N6-(2-hydroxyisobutyryl)lysine mark. The segment covering 7 to 19 (QGGKARAKSKSRS) has biased composition (basic residues). The residue at position 10 (Lys10) is an N6-(2-hydroxyisobutyryl)lysine; alternate. N6-(beta-hydroxybutyryl)lysine; alternate is present on Lys10. N6-lactoyllysine; alternate is present on Lys10. An N6-succinyllysine; alternate modification is found at Lys10. The residue at position 14 (Lys14) is an N6-(beta-hydroxybutyryl)lysine. Residues Lys14 and Lys16 each participate in a glycyl lysine isopeptide (Lys-Gly) (interchain with G-Cter in ubiquitin) cross-link. An N6-(2-hydroxyisobutyryl)lysine; alternate modification is found at Lys37. Lys37 carries the N6-(beta-hydroxybutyryl)lysine; alternate modification. N6-crotonyllysine; alternate is present on Lys37. N6-(2-hydroxyisobutyryl)lysine occurs at positions 75 and 76. Lys96 carries the post-translational modification N6-(2-hydroxyisobutyryl)lysine; alternate. At Lys96 the chain carries N6-(beta-hydroxybutyryl)lysine; alternate. Lys96 carries the post-translational modification N6-succinyllysine; alternate. Lys96 is subject to N6-glutaryllysine; alternate. Residue Gln105 is modified to N5-methylglutamine. Position 119 is an N6-(2-hydroxyisobutyryl)lysine; alternate (Lys119). At Lys119 the chain carries N6-(beta-hydroxybutyryl)lysine; alternate. Lys119 and Lys120 each carry N6-crotonyllysine; alternate. Residues Lys119 and Lys120 each carry the N6-glutaryllysine; alternate modification. A Glycyl lysine isopeptide (Lys-Gly) (interchain with G-Cter in ubiquitin); alternate cross-link involves residue Lys120. Position 121 is a phosphothreonine; by DCAF1 (Thr121). Residue Lys127 is modified to N6-crotonyllysine.

The protein belongs to the histone H2A family. In terms of assembly, the nucleosome is a histone octamer containing two molecules each of H2A, H2B, H3 and H4 assembled in one H3-H4 heterotetramer and two H2A-H2B heterodimers. The octamer wraps approximately 147 bp of DNA. Post-translationally, deiminated on Arg-4 in granulocytes upon calcium entry. Monoubiquitination of Lys-120 (H2AK119Ub) by RING1, TRIM37 and RNF2/RING2 complex gives a specific tag for epigenetic transcriptional repression and participates in X chromosome inactivation of female mammals. It is involved in the initiation of both imprinted and random X inactivation. Ubiquitinated H2A is enriched in inactive X chromosome chromatin. Ubiquitination of H2A functions downstream of methylation of 'Lys-27' of histone H3 (H3K27me). H2AK119Ub by RNF2/RING2 can also be induced by ultraviolet and may be involved in DNA repair. Monoubiquitination of Lys-120 (H2AK119Ub) by TRIM37 may promote transformation of cells in a number of breast cancers. Following DNA double-strand breaks (DSBs), it is ubiquitinated through 'Lys-63' linkage of ubiquitin moieties by the E2 ligase UBE2N and the E3 ligases RNF8 and RNF168, leading to the recruitment of repair proteins to sites of DNA damage. Ubiquitination at Lys-14 and Lys-16 (H2AK13Ub and H2AK15Ub, respectively) in response to DNA damage is initiated by RNF168 that mediates monoubiquitination at these 2 sites, and 'Lys-63'-linked ubiquitin are then conjugated to monoubiquitin; RNF8 is able to extend 'Lys-63'-linked ubiquitin chains in vitro. Deubiquitinated by USP51 at Lys-14 and Lys-16 (H2AK13Ub and H2AK15Ub, respectively) after damaged DNA is repaired. H2AK119Ub and ionizing radiation-induced 'Lys-63'-linked ubiquitination (H2AK13Ub and H2AK15Ub) are distinct events. In terms of processing, phosphorylation on Ser-2 (H2AS1ph) is enhanced during mitosis. Phosphorylation on Ser-2 by RPS6KA5/MSK1 directly represses transcription. Acetylation of H3 inhibits Ser-2 phosphorylation by RPS6KA5/MSK1. Phosphorylation at Thr-121 (H2AT120ph) by DCAF1 is present in the regulatory region of many tumor suppresor genes and down-regulates their transcription. Post-translationally, glutamine methylation at Gln-105 (H2AQ104me) by FBL is specifically dedicated to polymerase I. It is present at 35S ribosomal DNA locus and impairs binding of the FACT complex. Symmetric dimethylation on Arg-4 by the PRDM1/PRMT5 complex may play a crucial role in the germ-cell lineage. In terms of processing, crotonylation (Kcr) is specifically present in male germ cells and marks testis-specific genes in post-meiotic cells, including X-linked genes that escape sex chromosome inactivation in haploid cells. Crotonylation marks active promoters and enhancers and confers resistance to transcriptional repressors. It is also associated with post-meiotically activated genes on autosomes. Post-translationally, lactylated in macrophages by EP300/P300 by using lactoyl-CoA directly derived from endogenous or exogenous lactate, leading to stimulates gene transcription.

The protein localises to the nucleus. It localises to the chromosome. Its function is as follows. Core component of nucleosome. Nucleosomes wrap and compact DNA into chromatin, limiting DNA accessibility to the cellular machineries which require DNA as a template. Histones thereby play a central role in transcription regulation, DNA repair, DNA replication and chromosomal stability. DNA accessibility is regulated via a complex set of post-translational modifications of histones, also called histone code, and nucleosome remodeling. The sequence is that of Histone H2A type 1-A from Homo sapiens (Human).